The primary structure comprises 204 residues: LexA repressor (204 aa).

The segment at residues 29–49 is a DNA-binding region (H-T-H motif); it reads RAEIADIMGFQSKNAASDHLR. Catalysis depends on for autocatalytic cleavage activity residues Ser123 and Lys160.

It belongs to the peptidase S24 family. Homodimer.

It catalyses the reaction Hydrolysis of Ala-|-Gly bond in repressor LexA.. Its function is as follows. Represses a number of genes involved in the response to DNA damage (SOS response), including recA and lexA. In the presence of single-stranded DNA, RecA interacts with LexA causing an autocatalytic cleavage which disrupts the DNA-binding part of LexA, leading to derepression of the SOS regulon and eventually DNA repair. In Alcanivorax borkumensis (strain ATCC 700651 / DSM 11573 / NCIMB 13689 / SK2), this protein is LexA repressor.